The chain runs to 623 residues: Glutathione import ATP-binding protein GsiA (623 aa).

2 ABC transporter domains span residues 15–269 (VENL…RALL) and 314–564 (LRVR…RKLL). ATP contacts are provided by residues 49–56 (GESGSGKS) and 357–364 (GESGSGKS).

Belongs to the ABC transporter superfamily. Glutathione importer (TC 3.A.1.5.11) family. As to quaternary structure, the complex is composed of two ATP-binding proteins (GsiA), two transmembrane proteins (GsiC and GsiD) and a solute-binding protein (GsiB).

The protein resides in the cell inner membrane. The catalysed reaction is glutathione(out) + ATP + H2O = glutathione(in) + ADP + phosphate + H(+). Inhibited by verapamil but not by carbonyl cyanide m-chlorophenylhydrazone (CCCP). Its function is as follows. Part of the ABC transporter complex GsiABCD involved in glutathione import. Responsible for energy coupling to the transport system. The chain is Glutathione import ATP-binding protein GsiA from Escherichia coli (strain K12).